Here is a 470-residue protein sequence, read N- to C-terminus: 6-phospho-beta-galactosidase (470 aa).

Residues Gln-19, His-116, Asn-159, Glu-160, and Asn-297 each contribute to the D-galactose 6-phosphate site. Glu-160 functions as the Proton donor in the catalytic mechanism. Glu-375 serves as the catalytic Nucleophile. 4 residues coordinate D-galactose 6-phosphate: Ser-430, Trp-431, Lys-437, and Tyr-439.

This sequence belongs to the glycosyl hydrolase 1 family.

The enzyme catalyses a 6-phospho-beta-D-galactoside + H2O = D-galactose 6-phosphate + an alcohol. It functions in the pathway carbohydrate metabolism; lactose degradation; D-galactose 6-phosphate and beta-D-glucose from lactose 6-phosphate: step 1/1. This chain is 6-phospho-beta-galactosidase, found in Staphylococcus epidermidis (strain ATCC 35984 / DSM 28319 / BCRC 17069 / CCUG 31568 / BM 3577 / RP62A).